The primary structure comprises 780 residues: Cullin-5 (780 aa).

Residue Ser34 is modified to Phosphoserine. Thr210 carries the post-translational modification Phosphothreonine. Residues 711–772 (RILRTQEAII…HRYIRRDEAD (62 aa)) form the Cullin neddylation domain. Lys724 participates in a covalent cross-link: Glycyl lysine isopeptide (Lys-Gly) (interchain with G-Cter in NEDD8).

It belongs to the cullin family. In terms of assembly, component of multiple cullin-5-RING E3 ubiquitin-protein ligase complexes (ECS complexes, also named CRL5 complexes) formed of CUL5, Elongin BC (ELOB and ELOC), RNF7/RBX2 and a variable SOCS box domain-containing protein as substrate-specific recognition component. CUL5-containing ECS complexes specifically contain RNF7/RBX2, and not RBX1, as catalytic subunit. Component of the ECS(ASB2) complex with the substrate recognition component ASB2. Component of the ECS(ASB6) complex with the substrate recognition component ASB6. Component of the ECS(ASB7) complex with the substrate recognition component ASB7. Component of the ECS(ASB9) complex with the substrate recognition component ASB9. Component of the ECS(ASB11) complex with the substrate recognition component ASB11. Component of the ECS(ASB12) complex with the substrate recognition component ASB12. Component of the ECS(LRRC41) complex with the substrate recognition component LRRC41. Component of the ECS(SOCS1) complex with the substrate recognition component SOCS1. Component of the ECS(SOCS2) complex with the substrate recognition component SOCS2. Component of the ECS(WSB1) complex with the substrate recognition subunit WSB1. Component of the ECS(SOCS3) complex with the substrate recognition component SOCS3. Component of the ECS(SOCS7) complex with the substrate recognition component SOCS7. Component of the ECS(SPSB1) complex with the substrate recognition component SPSB1. Component of the ECS(SPSB3) complex with the substrate recognition component SPSB3. Component of the ECS(SPSB2) complex with the substrate recognition component SPSB2. Component of the ECS(SPSB4) complex with the substrate recognition component SPSB4. Component of the ECS(RAB40) complex with the substrate recognition subunit RAB40A, RAB40B or RAB40C. Component of the ECS(KLHDC1) complex with the substrate recognition component KLHDC1. Component of the ECS(PCMTD1) complex with the substrate recognition subunit PCMTD1. May also form complexes containing RBX1 and ELOA or VHL; additional evidence is however required to confirm this result in vivo. Interacts (when neddylated) with ARIH2; leading to activate the E3 ligase activity of ARIH2. Interacts with ERCC6; the interaction is induced by DNA damaging agents or inhibitors of RNA polymerase II elongation. Interacts with ELOA (via the BC-box). Interacts (unneddylated form) with DCUN1D1, DCUN1D2, DCUN1D3, DCUN1D4 and DCUN1D5; these interactions promote the cullin neddylation. Neddylated; which enhances the ubiquitination activity of ECS complexes and prevents binding of the inhibitor CAND1. Deneddylated via its interaction with the COP9 signalosome (CSN).

The protein localises to the nucleus. It participates in protein modification; protein ubiquitination. Its function is as follows. Core component of multiple cullin-5-RING E3 ubiquitin-protein ligase complexes (ECS complexes, also named CRL5 complexes), which mediate the ubiquitination and subsequent proteasomal degradation of target proteins. Acts a scaffold protein that contributes to catalysis through positioning of the substrate and the ubiquitin-conjugating enzyme. The functional specificity of the E3 ubiquitin-protein ligase complex depends on the variable SOCS box-containing substrate recognition component. Acts as a key regulator of neuron positioning during cortex development: component of various SOCS-containing ECS complexes, such as the ECS(SOCS7) complex, that regulate reelin signaling by mediating ubiquitination and degradation of DAB1. ECS(SOCS1) seems to direct ubiquitination of JAK2. The ECS(SOCS2) complex mediates the ubiquitination and subsequent proteasomal degradation of phosphorylated EPOR and GHR. The ECS(SPSB3) complex catalyzes ubiquitination of nuclear CGAS. ECS(KLHDC1) complex is part of the DesCEND (destruction via C-end degrons) pathway and mediates ubiquitination and degradation of truncated SELENOS selenoprotein produced by failed UGA/Sec decoding, which ends with a glycine. The ECS(ASB9) complex mediates ubiquitination and degradation of CKB. As part of some ECS complex, promotes 'Lys-11'-linked ubiquitination and degradation of BTRC. As part of a multisubunit ECS complex, polyubiquitinates monoubiquitinated POLR2A. As part of the ECS(RAB40C) complex, mediates ANKRD28 ubiquitination and degradation, thereby regulating protein phosphatase 6 (PP6) complex activity and focal adhesion assembly during cell migration. As part of the ECS(RAB40A) complex, mediates RHOU 'Lys-48'-linked ubiquitination and degradation, thus inhibiting focal adhesion disassembly during cell migration. As part of the ECS(RAB40B) complex, mediates LIMA1/EPLIN and RAP2 ubiquitination, thereby regulating actin cytoskeleton dynamics and stress fiber formation during cell migration. May form a cell surface vasopressin receptor. The polypeptide is Cullin-5 (Mus musculus (Mouse)).